A 583-amino-acid chain; its full sequence is Phosphoglucomutase, cytoplasmic (583 aa).

The segment at 1–20 (MANFKVSRVETTPFEGQKPG) is disordered. Residues R25 and S124 each contribute to the alpha-D-glucose 1,6-bisphosphate site. S124 (phosphoserine intermediate) is an active-site residue. S124, D300, D302, and D304 together coordinate Mg(2+). Residue S124 is modified to Phosphoserine. The alpha-D-glucose 1,6-bisphosphate site is built by D304, R305, T368, E387, S389, and K400.

The protein belongs to the phosphohexose mutase family. In terms of assembly, monomer. Mg(2+) serves as cofactor.

It localises to the cytoplasm. The enzyme catalyses alpha-D-glucose 1-phosphate = alpha-D-glucose 6-phosphate. It carries out the reaction O-phospho-L-seryl-[protein] + alpha-D-glucose 1-phosphate = alpha-D-glucose 1,6-bisphosphate + L-seryl-[protein]. It catalyses the reaction alpha-D-glucose 1,6-bisphosphate + L-seryl-[protein] = O-phospho-L-seryl-[protein] + alpha-D-glucose 6-phosphate. Functionally, catalyzes the reversible isomerization of alpha-D-glucose 1-phosphate to alpha-D-glucose 6-phosphate. The mechanism proceeds via the intermediate compound alpha-D-glucose 1,6-bisphosphate. This enzyme participates in both the breakdown and synthesis of glucose. The protein is Phosphoglucomutase, cytoplasmic (PGM1) of Solanum tuberosum (Potato).